Consider the following 2244-residue polypeptide: Multifunctional protein ura1 (2244 aa).

The GATase (Glutamine amidotransferase) stretch occupies residues 1-437; that stretch reads MSGLLPSLSS…GPRDTEFLFD (437 aa). Positions 16 to 44 are disordered; sequence QSEALGMPRTHGPKPSENDPKEPTCSPSP. The L-glutamine site is built by Ser101, Gly309, and Gly311. In terms of domain architecture, Glutamine amidotransferase type-1 spans 264–449; sequence RILVIDVGMK…IDVVKRSADA (186 aa). Residue Cys338 is the Nucleophile; for GATase activity of the active site. L-glutamine-binding residues include Gln342, Asn380, Gly382, and Tyr383. Residues His422 and Glu424 each act as for GATase activity in the active site. Residues 438–477 form a linker region; it reads VFIDVVKRSADAKSLQPFKLPGGTIEENRSRHPLVDAKRV. Positions 478-1014 are CPSase A; it reads LILGSGGLSI…VEHDIHFNDK (537 aa). Residues 478-1514 form a CPSase (Carbamoyl phosphate synthase) region; that stretch reads LILGSGGLSI…TNVKCAKLMI (1037 aa). ATP is bound by residues Arg594, Arg634, Gly640, Gly641, Arg671, Met673, Glu678, Gly704, Ile705, His706, Gln747, and Glu761. The region spanning 598 to 790 is the ATP-grasp 1 domain; that stretch reads ARAMDEINEK…LAFTAAKLGL (193 aa). Residues Gln747, Glu761, and Asn763 each contribute to the Mg(2+) site. 3 residues coordinate Mn(2+): Gln747, Glu761, and Asn763. The interval 1015-1514 is CPSase B; sequence GVMVLGSGVY…TNVKCAKLMI (500 aa). Ser1119 carries the phosphoserine modification. The ATP-grasp 2 domain occupies 1133-1324; sequence SRMLDDIGVD…MISMATDVIM (192 aa). The ATP site is built by Arg1169, Lys1208, Ile1210, Glu1215, Gly1240, Val1241, His1242, Ser1243, Gln1283, and Glu1295. 3 residues coordinate Mg(2+): Gln1283, Glu1295, and Asn1297. The Mn(2+) site is built by Gln1283, Glu1295, and Asn1297. In terms of domain architecture, MGS-like spans 1390–1552; sequence FRLPKKNILI…INISAFLPEF (163 aa). The interval 1515–1524 is linker; the sequence is EAICRNLDFS. The tract at residues 1525–1853 is defective DHOase domain; the sequence is LSTVDFQSSF…FDGHDVFFDG (329 aa). The linker stretch occupies residues 1854-1935; that stretch reads ELNFEHTYGR…VQLINSSPFY (82 aa). Phosphoserine is present on residues Ser1881 and Ser1885. Positions 1936–2244 are ATCase (Aspartate transcarbamylase); sequence RKHIISVHQV…CVMGATEVAN (309 aa). Carbamoyl phosphate is bound by residues Arg1988 and Thr1989. Lys2016 contributes to the L-aspartate binding site. Carbamoyl phosphate contacts are provided by Arg2037, His2065, and Gln2068. L-aspartate is bound by residues Arg2098 and Arg2160. Leu2199 and Pro2200 together coordinate carbamoyl phosphate.

It in the N-terminal section; belongs to the CarA family. In the 2nd section; belongs to the CarB family. This sequence in the 3rd section; belongs to the metallo-dependent hydrolases superfamily. DHOase family. CAD subfamily. The protein in the C-terminal section; belongs to the aspartate/ornithine carbamoyltransferase superfamily. ATCase family. The cofactor is Mg(2+). Mn(2+) serves as cofactor.

The catalysed reaction is hydrogencarbonate + L-glutamine + 2 ATP + H2O = carbamoyl phosphate + L-glutamate + 2 ADP + phosphate + 2 H(+). The enzyme catalyses L-glutamine + H2O = L-glutamate + NH4(+). It catalyses the reaction hydrogencarbonate + NH4(+) + 2 ATP = carbamoyl phosphate + 2 ADP + phosphate + 2 H(+). It carries out the reaction carbamoyl phosphate + L-aspartate = N-carbamoyl-L-aspartate + phosphate + H(+). The protein operates within pyrimidine metabolism; UMP biosynthesis via de novo pathway; (S)-dihydroorotate from bicarbonate: step 1/3. It participates in pyrimidine metabolism; UMP biosynthesis via de novo pathway; (S)-dihydroorotate from bicarbonate: step 2/3. Both CPSase and ATCase activities are feedback inhibited by the end product UTP. Functionally, multifunctional protein that encodes the first 2 enzymatic activities of the de novo pyrimidine pathway: carbamoylphosphate synthetase (CPSase; EC 6.3.5.5) and aspartate transcarbamylase (ATCase; EC 2.1.3.2). The CPSase-function is accomplished in 2 steps, by a glutamine-dependent amidotransferase activity (GATase) that binds and cleaves glutamine to produce ammonia, followed by an ammonium-dependent carbamoyl phosphate synthetase, which reacts with the ammonia, hydrogencarbonate and ATP to form carbamoyl phosphate. The endogenously produced carbamoyl phosphate is sequestered and channeled to the ATCase active site. ATCase then catalyzes the formation of carbamoyl-L-aspartate from L-aspartate and carbamoyl phosphate. This chain is Multifunctional protein ura1 (ura1), found in Schizosaccharomyces pombe (strain 972 / ATCC 24843) (Fission yeast).